We begin with the raw amino-acid sequence, 474 residues long: Cysteine--tRNA ligase (474 aa).

Cys30 contacts Zn(2+). Positions 32–42 (PTVYNYAHIGN) match the 'HIGH' region motif. Residues Cys215, His240, and Glu244 each coordinate Zn(2+). The 'KMSKS' region motif lies at 272–276 (KMSKS). Lys275 contributes to the ATP binding site.

It belongs to the class-I aminoacyl-tRNA synthetase family. Monomer. Requires Zn(2+) as cofactor.

It localises to the cytoplasm. It catalyses the reaction tRNA(Cys) + L-cysteine + ATP = L-cysteinyl-tRNA(Cys) + AMP + diphosphate. In Brachyspira hyodysenteriae (strain ATCC 49526 / WA1), this protein is Cysteine--tRNA ligase.